The chain runs to 645 residues: Sodium/hydrogen exchanger 9 (645 aa).

Residues 1 to 20 (MERQSRVMSEKDEYQFQHQG) are Lumenal-facing. The chain crosses the membrane as a helical span at residues 21-41 (AVELLVFNFLLILTILTIWLF). Residues 42–45 (KNHR) lie on the Cytoplasmic side of the membrane. Residues 46-66 (FRFLHETGGAMVYGLIMGLIL) form a helical membrane-spanning segment. Over 67 to 126 (RYATAPTDIESGTVYDCVKLTFSPSTLLVNITDQVYEYKYKREISQHNINPHQGNAILEK) the chain is Lumenal. N-linked (GlcNAc...) asparagine glycosylation occurs at Asn-96. The helical transmembrane segment at 127 to 147 (MTFDPEIFFNVLLPPIIFHAG) threads the bilayer. Residues 148–164 (YSLKKRHFFQNLGSILT) lie on the Cytoplasmic side of the membrane. The chain crosses the membrane as a helical span at residues 165–185 (YAFLGTAISCIVIGLIMYGFV). At 186-203 (KAMIHAGQLKNGDFHFTD) the chain is on the lumenal side. The chain crosses the membrane as a helical span at residues 204 to 224 (CLFFGSLMSATDPVTVLAIFH). At 225–235 (ELHVDPDLYTL) the chain is on the cytoplasmic side. The helical transmembrane segment at 236–256 (LFGESVLNDAVAIVLTYSISI) threads the bilayer. At 257 to 277 (YSPKENPNAFDAAAFFQSVGN) the chain is on the lumenal side. A helical transmembrane segment spans residues 278-298 (FLGIFAGSFAMGSAYAIITAL). The Cytoplasmic segment spans residues 299-301 (LTK). Transmembrane regions (helical) follow at residues 302 to 322 (FTKL…LSWS) and 323 to 343 (AFLS…FCGV). The Cytoplasmic portion of the chain corresponds to 344 to 364 (TQAHYTYNNLSSDSKIRTKQL). The helical transmembrane segment at 365 to 385 (FEFMNFLAENVIFCYMGLALF) threads the bilayer. A topological domain (lumenal) is located at residue Thr-386. A helical membrane pass occupies residues 387-407 (FQNHIFNALFILGAFLAIFVA). Topologically, residues 408–429 (RACNIYPLSFLLNLGRKQKIPW) are cytoplasmic. Residues 430-450 (NFQHMMMFSGLRGAIAFALAI) form a helical membrane-spanning segment. Topologically, residues 451–465 (RNTESQPKQMMFTTT) are lumenal. A helical membrane pass occupies residues 466–486 (LLLVFFTVWVFGGGTTPMLTW). Residues 487–645 (LQIRVGVDLD…EQTLGQSQLN (159 aa)) lie on the Cytoplasmic side of the membrane. A disordered region spans residues 594–622 (QASSPCSPPARLGLDQKASPQTPGKENIY).

It belongs to the monovalent cation:proton antiporter 1 (CPA1) transporter (TC 2.A.36) family. In terms of assembly, homodimer; phosphatidylinositol-4,5-bisphosphate (PIP2) and phosphatidylinositol 3,4,5-trisphosphate (PIP3) could be involved in the dimer stabilization. Interacts (via the C-terminus) with RACK1. Interacts with CHP1. As to expression, ubiquitously expressed in all tissues tested. Expressed at highest levels in heart and skeletal muscle, followed by placenta, kidney, and liver. Expressed in the brain, in the medulla and spinal cord.

The protein resides in the late endosome membrane. The protein localises to the early endosome membrane. It is found in the recycling endosome membrane. It localises to the cell membrane. Its subcellular location is the cytoplasmic vesicle. The protein resides in the phagosome membrane. The enzyme catalyses Na(+)(in) + H(+)(out) = Na(+)(out) + H(+)(in). It carries out the reaction K(+)(in) + H(+)(out) = K(+)(out) + H(+)(in). Endosomal Na(+), K(+)/H(+) antiporter. Mediates the electroneutral exchange of endosomal luminal H(+) for a cytosolic Na(+) or K(+). By facilitating proton efflux, SLC9A9 counteracts the acidity generated by vacuolar (V)-ATPase, thereby limiting luminal acidification. Regulates organellar pH and consequently, e.g., endosome maturation and endocytic trafficking of plasma membrane receptors and neurotransporters. Promotes the recycling of transferrin receptors back to the cell surface to facilitate additional iron uptake in the brain. Regulates synaptic transmission by regulating the luminal pH of axonal endosomes. Regulates phagosome lumenal pH, thus affecting phagosome maturation, and consequently, microbicidal activity in macrophages. Can also be active at the cell surface of specialized cells, e.g., in the inner ear hair bundles uses the high K(+) of the endolymph to regulate intracelular pH. This is Sodium/hydrogen exchanger 9 from Homo sapiens (Human).